A 246-amino-acid chain; its full sequence is Probable septum site-determining protein MinC (246 aa).

Belongs to the MinC family. As to quaternary structure, interacts with MinD and FtsZ.

In terms of biological role, cell division inhibitor that blocks the formation of polar Z ring septums. Rapidly oscillates between the poles of the cell to destabilize FtsZ filaments that have formed before they mature into polar Z rings. Prevents FtsZ polymerization. This is Probable septum site-determining protein MinC from Pseudomonas syringae pv. tomato (strain ATCC BAA-871 / DC3000).